Reading from the N-terminus, the 61-residue chain is Temporin-ALj (61 aa).

Positions Met-1–Cys-22 are cleaved as a signal peptide. A propeptide spanning residues Glu-23 to Arg-46 is cleaved from the precursor. Residue Leu-59 is modified to Leucine amide.

It belongs to the frog skin active peptide (FSAP) family. Temporin subfamily. In terms of tissue distribution, expressed by the skin glands.

The protein localises to the secreted. In terms of biological role, antimicrobial peptide with activity against Gram-positive and Gram-negative bacteria and against fungi. Has been tested against S.aureus (MIC=7.5 ug/mL), B.pumilus (MIC=15.0 ug/mL), B.cereus (MIC=75.0 ug/mL), E.coli (MIC=15.0 ug/mL), B.dysenteriae (MIC=30.0 ug/mL), A.cacoaceticus (MIC=60.0 ug/mL), P.aeruginosa (MIC=7.5 ug/mL) and C.albicans (MIC=5.0 ug/mL). Also shows a weak hemolytic activity. This Amolops loloensis (Lolokou Sucker Frog) protein is Temporin-ALj.